The sequence spans 177 residues: Large ribosomal subunit protein uL5 (177 aa).

It belongs to the universal ribosomal protein uL5 family. Part of the 50S ribosomal subunit; part of the 5S rRNA/L5/L18/L25 subcomplex. Contacts the 5S rRNA and the P site tRNA. Forms a bridge to the 30S subunit in the 70S ribosome.

Functionally, this is one of the proteins that bind and probably mediate the attachment of the 5S RNA into the large ribosomal subunit, where it forms part of the central protuberance. In the 70S ribosome it contacts protein S13 of the 30S subunit (bridge B1b), connecting the 2 subunits; this bridge is implicated in subunit movement. Contacts the P site tRNA; the 5S rRNA and some of its associated proteins might help stabilize positioning of ribosome-bound tRNAs. The sequence is that of Large ribosomal subunit protein uL5 from Ehrlichia canis (strain Jake).